An 836-amino-acid chain; its full sequence is Transcriptional regulatory protein UME6 (836 aa).

The span at 1–14 (MLDKARSQSKHMDE) shows a compositional bias: basic and acidic residues. Disordered stretches follow at residues 1–77 (MLDK…IESL), 92–168 (STCA…CNGH), 218–332 (HLPP…DDQC), and 381–464 (NESS…GFFY). Composition is skewed to polar residues over residues 39–48 (SRATLMNSSQ), 61–77 (GANSRHPTISSASIESL), and 92–112 (STCAPNNTPVHTPSGSPSLKV). Position 114 is a phosphoserine (S114). Over residues 117 to 126 (DIKDDPKEND) the composition is skewed to basic and acidic residues. Residues S141, S150, and S228 each carry the phosphoserine modification. Residues 226–236 (AVSSPGTTAAG) show a composition bias toward low complexity. Positions 258–272 (TSANKNNGKTTNSPM) are enriched in polar residues. The span at 273–305 (SILSRNNSTNNNDNNSIQSSDSRESSNNNEIGG) shows a compositional bias: low complexity. Phosphoserine occurs at positions 316 and 318. Residues 316–325 (SPSNDSQVQH) show a composition bias toward polar residues. Positions 381–398 (NESSSNNASSNTDTPTNS) are enriched in low complexity. A compositionally biased stretch (polar residues) spans 399-414 (RHANTSSSITSRNNFQ). Residues 426–446 (PTSASSFTSTNNNNPQRNNIN) show a composition bias toward low complexity. The tract at residues 508-594 (NSASSSTKLD…QPIFESNNST (87 aa)) is SIN3-binding. Residues 636–766 (NGKRIDRRLS…ATSSTSQGTR (131 aa)) are disordered. Residue S645 is modified to Phosphoserine. A compositionally biased stretch (polar residues) spans 670 to 679 (VASQTNSDYN). The span at 680-702 (SLGESSTSSAPSSPSLKASSGLA) shows a compositional bias: low complexity. Positions 718–739 (SKGKNVKPKAKSKAKQSSKKRP) are enriched in basic residues. Low complexity predominate over residues 740–751 (NNTTSKSKANNS). Residues 771-798 (CWICRLRKKKCTEERPHCFNCERLKLDC) constitute a DNA-binding region (zn(2)-C6 fungal-type).

As to quaternary structure, component of the RPD3C(L) complex composed of at least ASH1, CTI6, DEP1, PHO23, RPD3, RXT2, RXT3, SAP30, SDS3, SIN3, UME1 and UME6. Interacts with RIM11, MCK1 and IME1. Post-translationally, phosphorylated by RIM11 and MCK1.

It is found in the nucleus. Component of the RPD3C(L) histone deacetylase complex (HDAC) responsible for the deacetylation of lysine residues on the N-terminal part of the core histones (H2A, H2B, H3 and H4). Histone deacetylation gives a tag for epigenetic repression and plays an important role in transcriptional regulation, cell cycle progression and developmental events. Binds to the URS1 site (5'-AGCCGCCGA-3') and recruits the RPD3 histone deacetylase complex to the promoters to negatively regulate the expression of many genes including CAR1 (arginase), several required for sporulation, mating type switching, inositol metabolism, and oxidative carbon metabolism. Also recruits the ISW2 chromatin remodeling complex to promoters in a second gene repression pathway. Associates with the master regulator of meiosis IME1 in order to activate the expression of meiosis genes. Has both a positive and negative role in regulating phospholipid biosynthesis. The polypeptide is Transcriptional regulatory protein UME6 (UME6) (Saccharomyces cerevisiae (strain ATCC 204508 / S288c) (Baker's yeast)).